A 430-amino-acid polypeptide reads, in one-letter code: Probable carboxypeptidase AFLA_037450 (430 aa).

The signal sequence occupies residues 1–16; it reads MKSIYSLVLCTALTAA. A glycan (N-linked (GlcNAc...) asparagine) is linked at asparagine 84. Zn(2+) is bound at residue aspartate 156. The active-site Proton acceptor is glutamate 188. Position 189 (glutamate 189) interacts with Zn(2+). Asparagine 285 carries an N-linked (GlcNAc...) asparagine glycan.

This sequence belongs to the peptidase M20A family. The cofactor is Zn(2+).

It localises to the secreted. The chain is Probable carboxypeptidase AFLA_037450 from Aspergillus flavus (strain ATCC 200026 / FGSC A1120 / IAM 13836 / NRRL 3357 / JCM 12722 / SRRC 167).